The primary structure comprises 354 residues: Macrosialin (354 aa).

The N-terminal stretch at 1 to 21 is a signal peptide; it reads MRLAVLFSGALLGLLAAQGTG. The Extracellular portion of the chain corresponds to 22–319; that stretch reads NDCPHKKSAT…QSFSCPSDRS (298 aa). The segment at 23–140 is mucin-like; sequence DCPHKKSATL…SPGFTSSAHP (118 aa). Residues 40 to 51 are compositionally biased toward low complexity; sequence PTVTESTGTTSH. Residues 40 to 162 are disordered; it reads PTVTESTGTT…SKETIGDYTW (123 aa). The span at 52 to 61 shows a compositional bias: basic residues; that stretch reads RTTKSHKTTT. Over residues 62-84 the composition is skewed to low complexity; that stretch reads HRTTTTGTTSHGPTTATHNPTTT. 2 consecutive repeat copies span residues 70–99 and 100–129. The interval 70 to 129 is 2 X 30 AA tandem repeats; sequence TSHGPTTATHNPTTTSHGNVTVHPTSNSTATSQGPSTATHSPATTSHGNATVHPTSNSTA. Over residues 85–102 the composition is skewed to polar residues; it reads SHGNVTVHPTSNSTATSQ. Asn-88 and Asn-96 each carry an N-linked (GlcNAc...) asparagine glycan. Residues 103 to 117 are compositionally biased toward low complexity; it reads GPSTATHSPATTSHG. N-linked (GlcNAc...) asparagine glycans are attached at residues Asn-118 and Asn-126. Over residues 121-135 the composition is skewed to polar residues; it reads VHPTSNSTATSPGFT. Positions 140-150 are enriched in pro residues; the sequence is PEPPPPSPSPS. N-linked (GlcNAc...) asparagine glycosylation is found at Asn-164, Asn-199, Asn-246, Asn-261, and Asn-279. Cys-169 and Cys-207 are joined by a disulfide. The cysteines at positions 277 and 314 are disulfide-linked. Residues 320–344 traverse the membrane as a helical segment; the sequence is ILLPLIIGLILLGLLALVLIAFCII. Residues 345-354 lie on the Cytoplasmic side of the membrane; that stretch reads RRRPSAYQAL.

It belongs to the LAMP family. Post-translationally, N- and O-glycosylated. Highly expressed by blood monocytes and tissue macrophages. Also expressed in lymphocytes, fibroblasts and endothelial cells. Expressed in many tumor cell lines which could allow them to attach to selectins on vascular endothelium, facilitating their dissemination to secondary sites.

It localises to the cell membrane. Its subcellular location is the endosome membrane. It is found in the lysosome membrane. Its function is as follows. Could play a role in phagocytic activities of tissue macrophages, both in intracellular lysosomal metabolism and extracellular cell-cell and cell-pathogen interactions. Binds to tissue- and organ-specific lectins or selectins, allowing homing of macrophage subsets to particular sites. Rapid recirculation of CD68 from endosomes and lysosomes to the plasma membrane may allow macrophages to crawl over selectin-bearing substrates or other cells. In Homo sapiens (Human), this protein is Macrosialin (CD68).